The primary structure comprises 528 residues: Na(+)/H(+) antiporter NhaB (528 aa).

Topologically, residues 1 to 23 (MPISLGNAFIKNFLGKAPDWYKV) are cytoplasmic. Residues 24-46 (AIIAFLIINPIVFFLINPFVAGW) form a helical membrane-spanning segment. Residues 47 to 95 (LLVAEFIFTLAMALKCYPLQPGGLLAIEAIAIGMTSPAQVKHELVANIE) are Periplasmic-facing. The chain crosses the membrane as a helical span at residues 96 to 118 (VLLLLVFMVAGIYFMKHLLLFIF). Over 119–129 (TKILLGIRSKT) the chain is Cytoplasmic. The helical transmembrane segment at 130–163 (LLSLAFCFAAAFLSAFLDALTVIAVVISVAIGFY) threads the bilayer. Residues 164–239 (SIYHKVASGN…ADQAGWLFGE (76 aa)) lie on the Periplasmic side of the membrane. A helical membrane pass occupies residues 240–262 (FLIRMSPVTLPVFFCGLITCALV). The Cytoplasmic portion of the chain corresponds to 263-297 (EKLKVFGYGAKLPNNVRQILVDFDNEERKTRTNQD). Residues 298–317 (VAKLWVQGLIAVWLIVALAL) traverse the membrane as a helical segment. Residues 318-320 (HLA) lie on the Periplasmic side of the membrane. Residues 321-340 (AVGLIGLSVIILATAFTGVI) traverse the membrane as a helical segment. Over 341 to 352 (EEHSMGKAFEEA) the chain is Cytoplasmic. A helical transmembrane segment spans residues 353–375 (LPFTALLAVFFSIVAVIIDQELF). At 376-389 (KPVIDAVLAVEDKG) the chain is on the periplasmic side. The helical transmembrane segment at 390 to 412 (TQLALFYVANGLLSMVSDNVFVG) threads the bilayer. Residues 413 to 477 (TVYINEVKTA…PLIRLSYGRM (65 aa)) are Cytoplasmic-facing. Residues 478 to 500 (VIMALPYTIVLAIVGLMGIMFFL) form a helical membrane-spanning segment. Over 501-528 (EPATASFYDAGWILPHSGDLTPVVSGGH) the chain is Periplasmic.

The protein belongs to the NhaB Na(+)/H(+) (TC 2.A.34) antiporter family.

It localises to the cell inner membrane. The catalysed reaction is 2 Na(+)(in) + 3 H(+)(out) = 2 Na(+)(out) + 3 H(+)(in). In terms of biological role, na(+)/H(+) antiporter that extrudes sodium in exchange for external protons. In Vibrio alginolyticus, this protein is Na(+)/H(+) antiporter NhaB.